We begin with the raw amino-acid sequence, 1182 residues long: Lysine-specific demethylase hairless (1182 aa).

4 disordered regions span residues 227 to 257 (LGLA…GAGR), 302 to 380 (YQLG…KKTW), 411 to 443 (AGSP…ARAW), and 507 to 546 (TGHS…ASLN). Positions 307-321 (PATPRCPSPGPPTPP) are enriched in pro residues. An LXXLL motif 1 motif is present at residues 561–565 (LCRLL). Residues 595-620 (CSRCHHGLFNTHWRCSHCSHRLCVAC) form a C6-type zinc finger. The interval 697–746 (GDGGQQKEPTEKTPPTPQPSCNGDSNRTKDIKEETPDSTESPAEDGAGRS) is disordered. The span at 722-731 (NRTKDIKEET) shows a compositional bias: basic and acidic residues. An LXXLL motif 2 motif is present at residues 753-757 (LCELL). The 212-residue stretch at 939–1150 (DASRVQNLAS…LSAQLYHQGA (212 aa)) folds into the JmjC domain. Residues C1000, E1002, and H1118 each contribute to the Fe cation site.

Fe(2+) serves as cofactor. In terms of tissue distribution, expressed predominantly in brain, hair follicles and interfollicular epidermis. No expression in dermis.

Its subcellular location is the nucleus. It catalyses the reaction N(6),N(6)-dimethyl-L-lysyl(9)-[histone H3] + 2 2-oxoglutarate + 2 O2 = L-lysyl(9)-[histone H3] + 2 formaldehyde + 2 succinate + 2 CO2. Its function is as follows. Histone demethylase that specifically demethylates both mono- and dimethylated 'Lys-9' of histone H3. May act as a transcription regulator controlling hair biology (via targeting of collagens), neural activity, and cell cycle. The sequence is that of Lysine-specific demethylase hairless (Hr) from Mus musculus (Mouse).